Consider the following 674-residue polypeptide: MQTSSSRSVHLSEWQKNYFAITSGICTGPKADAYRAQILRIQYAWANSEISQVCATKLFKKYAEKYSAIIDSDNVESGLNNYAENILTLAGSQQTDSDKWQSGLSINNVFKMSSVQKMMQAGKKFKDSLLEPALASVVIHKEATVFDLPKFSVCGSSQESDSLPNSAHDRDRTQDFPESNRLKLLQNAQPPMVTNTARTCPTFSAPVGESATAKFHVTPLFGNVKKENHSSAKENIGLNVFLSNQSCFPAACENPQRKSFYGSGTIDALSNPILNKACSKTEDNGPKEDSSLPTFKTAKEQLWVDQQKKYHQPQRASGSSYGGVKKSLGASRSRGILGKFVPPIPKQDGGEQNGGMQCKPYGAGPTEPAHPVDERLKNLEPKMIELIMNEIMDHGPPVNWEDIAGVEFAKATIKEIVVWPMLRPDIFTGLRGPPKGILLFGPPGTGKTLIGKCIASQSGATFFSISASSLTSKWVGEGEKMVRALFAVARCQQPAVIFIDEIDSLLSQRGDGEHESSRRIKTEFLVQLDGATTSSEDRILVVGATNRPQEIDEAARRRLVKRLYIPLPEASARKQIVINLMSKEQCCLSEEEIEQIVQQSDAFSGADMTQLCREASLGPIRSLQTADIATITPDQVRPIAYIDFENAFRTVRPSVSPKDLELYENWNKTFGCGK.

Residues 157–179 are disordered; sequence SQESDSLPNSAHDRDRTQDFPES. Basic and acidic residues predominate over residues 167-179; the sequence is AHDRDRTQDFPES. Lys-225 participates in a covalent cross-link: Glycyl lysine isopeptide (Lys-Gly) (interchain with G-Cter in SUMO2). Position 259 is a phosphoserine (Ser-259). The segment at 295-344 is necessary and sufficient for interaction with RAD51; the sequence is FKTAKEQLWVDQQKKYHQPQRASGSSYGGVKKSLGASRSRGILGKFVPPI. Lys-339 bears the N6-acetyllysine mark. ATP-binding positions include Ala-404 and 444-449; that span reads GTGKTL.

The protein belongs to the AAA ATPase family. In terms of assembly, hexamer. Interacts (via N-terminal one-half region) with RAD51; the interaction is direct. Interacts (via N-terminal one-half region) with SPIDR (via the C-terminal region); the interaction is direct. Interacts with FIRRM; may regulate homologous recombination. Requires Mg(2+) as cofactor.

It is found in the nucleus. Its subcellular location is the cytoplasm. The protein localises to the perinuclear region. The enzyme catalyses ATP + H2O = ADP + phosphate + H(+). Its function is as follows. Involved in DNA double-strand break (DBS) repair via homologous recombination (HR). Recruited at DSB sites independently of BRCA2, RAD51 and RAD51 paralogs in a H2AX-dependent manner. May regulate osteoblast proliferation and differentiation. May play a role in the control of male meiosis dynamic. This chain is Fidgetin-like protein 1 (FIGNL1), found in Homo sapiens (Human).